The sequence spans 98 residues: DNA-binding protein Fis (98 aa).

Residues 74–93 constitute a DNA-binding region (H-T-H motif); it reads QTRAAQMMGINRGTLRKKLK.

The protein belongs to the transcriptional regulatory Fis family. In terms of assembly, homodimer.

Its function is as follows. Activates ribosomal RNA transcription. Plays a direct role in upstream activation of rRNA promoters. This chain is DNA-binding protein Fis, found in Sodalis glossinidius (strain morsitans).